We begin with the raw amino-acid sequence, 143 residues long: Photosystem I reaction center subunit IV A, chloroplastic (143 aa).

The N-terminal 44 residues, methionine 1–arginine 44, are a transit peptide targeting the chloroplast. Residues valine 43–serine 85 form a disordered region. A compositionally biased stretch (low complexity) spans aspartate 48 to lysine 73.

This sequence belongs to the PsaE family. Post-translationally, 2 isoforms may exist. With or without the N-terminal alanine.

It localises to the plastid. Its subcellular location is the chloroplast thylakoid membrane. Functionally, stabilizes the interaction between PsaC and the PSI core, assists the docking of the ferredoxin to PSI and interacts with ferredoxin-NADP oxidoreductase. In Arabidopsis thaliana (Mouse-ear cress), this protein is Photosystem I reaction center subunit IV A, chloroplastic (PSAE1).